The chain runs to 600 residues: DDB1- and CUL4-associated factor 8-like protein 1 (600 aa).

The tract at residues 1 to 122 (MSHQEGSTGG…EEEQPRMCPR (122 aa)) is disordered. Acidic residues-rich tracts occupy residues 74–83 (SSSEDVELES) and 96–115 (EETE…EEEE). 7 WD repeats span residues 194 to 233 (SHAG…PVLN), 237 to 278 (GHDI…YCEN), 284 to 324 (KHRG…PASK), 332 to 372 (DKKV…KKEN), 388 to 427 (DFPT…GAQY), 435 to 475 (RNND…IIQF), and 479 to 518 (DRGD…ATEL). The tract at residues 562–600 (PGWRDHGAEFPDEEELDESSSTSDTSEEEGQDRVQCIPS) is disordered.

The protein belongs to the WD repeat DCAF8 family.

The chain is DDB1- and CUL4-associated factor 8-like protein 1 (DCAF8L1) from Homo sapiens (Human).